The sequence spans 324 residues: tRNA N6-adenosine threonylcarbamoyltransferase (324 aa).

Fe cation-binding residues include histidine 107, histidine 111, and tyrosine 127. Residues 127–131 (YVSGG), aspartate 159, glycine 172, glutamate 176, and asparagine 257 contribute to the substrate site. Aspartate 285 contacts Fe cation.

The protein belongs to the KAE1 / TsaD family. In terms of assembly, monomer. Component of the KEOPS complex that consists of Kae1, Bud32, Cgi121 and Pcc1; the whole complex dimerizes. It depends on Fe(2+) as a cofactor.

It localises to the cytoplasm. It carries out the reaction L-threonylcarbamoyladenylate + adenosine(37) in tRNA = N(6)-L-threonylcarbamoyladenosine(37) in tRNA + AMP + H(+). In terms of biological role, required for the formation of a threonylcarbamoyl group on adenosine at position 37 (t(6)A37) in tRNAs that read codons beginning with adenine. Is a component of the KEOPS complex that is probably involved in the transfer of the threonylcarbamoyl moiety of threonylcarbamoyl-AMP (TC-AMP) to the N6 group of A37. Kae1 likely plays a direct catalytic role in this reaction, but requires other protein(s) of the complex to fulfill this activity. This is tRNA N6-adenosine threonylcarbamoyltransferase from Thermococcus sibiricus (strain DSM 12597 / MM 739).